The chain runs to 357 residues: CCN family member 3 (357 aa).

Positions 1–31 (MQSVQSTSFCLRKQCLCLTFLLLHLLGQVAA) are cleaved as a signal peptide. Positions 32-105 (TQRCPPQCPG…SNQTGICTAV (74 aa)) constitute an IGFBP N-terminal domain. 6 disulfide bridges follow: cysteine 35–cysteine 61, cysteine 39–cysteine 63, cysteine 43–cysteine 64, cysteine 50–cysteine 67, cysteine 75–cysteine 89, and cysteine 81–cysteine 102. An N-linked (GlcNAc...) asparagine glycan is attached at asparagine 97. One can recognise a VWFC domain in the interval 108–174 (DNCVFDGVIY…GECCEKWICG (67 aa)). One can recognise a TSP type-1 domain in the interval 205 to 250 (NCIEQTTEWTACSKSCGMGFSTRVTNRNRQCEMLKQTRLCMVRPCE). Cysteine 244 carries S-palmitoyl cysteine lipidation. 5 disulfide bridges follow: cysteine 264–cysteine 301, cysteine 281–cysteine 315, cysteine 292–cysteine 331, cysteine 295–cysteine 333, and cysteine 300–cysteine 337. The 75-residue stretch at 264–338 (CLRTKKSLKA…GTCTCHTNCP (75 aa)) folds into the CTCK domain. Residue asparagine 280 is glycosylated (N-linked (GlcNAc...) asparagine).

This sequence belongs to the CCN family. In terms of assembly, interacts with FBLN1. Interacts (via CTCK domain) with NOTCH1 (via the EGF-like repeat region). Interacts with GJA1/CX43. Interacts with ITGA5:ITGB1, ITGAV:ITGB3 and ITGAV:ITGB5. Interacts with ZDHHC22; the interaction may lead to CCN3 palmitoylation. In terms of processing, may be palmitoylated on Cys-244, which is important for extracellular secretion. Expressed in endothelial cells (at protein level). Expressed in bone marrow and thymic cells.

It is found in the secreted. The protein resides in the cytoplasm. Its subcellular location is the cell junction. It localises to the gap junction. Functionally, immediate-early protein playing a role in various cellular processes including proliferation, adhesion, migration, differentiation and survival. Acts by binding to integrins or membrane receptors such as NOTCH1. Essential regulator of hematopoietic stem and progenitor cell function. Inhibits myogenic differentiation through the activation of Notch-signaling pathway. Inhibits vascular smooth muscle cells proliferation by increasing expression of cell-cycle regulators such as CDKN2B or CDKN1A independently of TGFB1 signaling. Ligand of integrins ITGAV:ITGB3 and ITGA5:ITGB1, acts directly upon endothelial cells to stimulate pro-angiogenic activities and induces angiogenesis. In endothelial cells, supports cell adhesion, induces directed cell migration (chemotaxis) and promotes cell survival. Also plays a role in cutaneous wound healing acting as integrin receptor ligand. Supports skin fibroblast adhesion through ITGA5:ITGB1 and ITGA6:ITGB1 and induces fibroblast chemotaxis through ITGAV:ITGB5. Seems to enhance bFGF-induced DNA synthesis in fibroblasts. Involved in bone regeneration as a negative regulator. Enhances the articular chondrocytic phenotype, whereas it repressed the one representing endochondral ossification. Impairs pancreatic beta-cell function, inhibits beta-cell proliferation and insulin secretion. Plays a role as negative regulator of endothelial pro-inflammatory activation reducing monocyte adhesion, its anti-inflammatory effects occur secondary to the inhibition of NF-kappaB signaling pathway. Contributes to the control and coordination of inflammatory processes in atherosclerosis. Attenuates inflammatory pain through regulation of IL1B- and TNF-induced MMP9, MMP2 and CCL2 expression. Inhibits MMP9 expression through ITGB1 engagement. Brain osteoanabolic hormone. Drives osteogenesis in osteochondral skeletal stem cells. During lactation, maintains the maternal skeleton and viability of offspring. This chain is CCN family member 3, found in Homo sapiens (Human).